The following is an 832-amino-acid chain: Golgin subfamily A member 6-like protein 24 (832 aa).

Disordered stretches follow at residues 1–107, 303–333, 351–431, 508–652, and 664–832; these read MWPQ…QEAL, QEQE…MRRQ, MHEQ…EMWR, QEEM…EQEE, and QEEM…MQEH. Positions 13-27 are enriched in basic residues; the sequence is LPTHPHLPTHPHLPT. The segment covering 37–58 has biased composition (basic and acidic residues); it reads MSKETRQSKLAEAKEQLTDHHP. Polar residues-rich tracts occupy residues 59 to 69 and 77 to 89; these read QTNPSVGTAAS and NNGT…TSGG. Basic and acidic residues predominate over residues 92–107; sequence SPEDEQKASHQHQEAL. Residues 163 to 828 are a coiled coil; it reads LEQALSAVAT…EVRLRQQEEK (666 aa). Composition is skewed to basic and acidic residues over residues 664 to 684 and 692 to 832; these read QEEM…KMWE and QEEK…MQEH.

Belongs to the GOLGA6 family.

This is Golgin subfamily A member 6-like protein 24 from Homo sapiens (Human).